A 707-amino-acid polypeptide reads, in one-letter code: Anaerobic ribonucleoside-triphosphate reductase (707 aa).

An ATP-cone domain is found at 4-95; the sequence is FGVIKRDGSR…EYRHDRDLAR (92 aa). The 124-residue stretch at 584–707 folds into the Glycine radical domain; it reads KKVNPYDKLD…EEVKRRVKHL (124 aa). Zn(2+) is bound by residues C645, C648, C663, and C666. Position 682 is a glycine radical (G682).

This sequence belongs to the anaerobic ribonucleoside-triphosphate reductase family. Forms a tetramer composed of two NrdD and two NrdG subunits.

The catalysed reaction is a ribonucleoside 5'-triphosphate + formate + H(+) = a 2'-deoxyribonucleoside 5'-triphosphate + CO2 + H2O. With respect to regulation, activated under anaerobic conditions by NrdG, a tightly associated activase. Activation involves the formation of a glycyl radical at Gly-682. In terms of biological role, catalyzes the conversion of ribonucleotides into deoxyribonucleotides, which are required for DNA synthesis and repair. This is Anaerobic ribonucleoside-triphosphate reductase (nrdD) from Haemophilus influenzae (strain ATCC 51907 / DSM 11121 / KW20 / Rd).